The primary structure comprises 278 residues: Elongation factor Ts (278 aa).

Positions 80-83 (TDFV) are involved in Mg(2+) ion dislocation from EF-Tu.

This sequence belongs to the EF-Ts family.

The protein resides in the cytoplasm. Functionally, associates with the EF-Tu.GDP complex and induces the exchange of GDP to GTP. It remains bound to the aminoacyl-tRNA.EF-Tu.GTP complex up to the GTP hydrolysis stage on the ribosome. In Renibacterium salmoninarum (strain ATCC 33209 / DSM 20767 / JCM 11484 / NBRC 15589 / NCIMB 2235), this protein is Elongation factor Ts.